A 63-amino-acid polypeptide reads, in one-letter code: Large ribosomal subunit protein bL32 (63 aa).

Residues 1-16 (MAVPKRKTSRMKRGFR) show a composition bias toward basic residues. The segment at 1–22 (MAVPKRKTSRMKRGFRRSADAI) is disordered.

The protein belongs to the bacterial ribosomal protein bL32 family.

This Beijerinckia indica subsp. indica (strain ATCC 9039 / DSM 1715 / NCIMB 8712) protein is Large ribosomal subunit protein bL32.